Reading from the N-terminus, the 121-residue chain is Large ribosomal subunit protein uL18 (121 aa).

Belongs to the universal ribosomal protein uL18 family. In terms of assembly, part of the 50S ribosomal subunit; part of the 5S rRNA/L5/L18/L25 subcomplex. Contacts the 5S and 23S rRNAs.

Its function is as follows. This is one of the proteins that bind and probably mediate the attachment of the 5S RNA into the large ribosomal subunit, where it forms part of the central protuberance. This is Large ribosomal subunit protein uL18 from Polaromonas sp. (strain JS666 / ATCC BAA-500).